A 173-amino-acid polypeptide reads, in one-letter code: UPF0316 protein Amet_0954 (173 aa).

Helical transmembrane passes span 3–23 (LVLG…MGTV), 38–58 (AIGF…LEAL), and 61–81 (PVNI…GIYI).

Belongs to the UPF0316 family.

It is found in the cell membrane. In Alkaliphilus metalliredigens (strain QYMF), this protein is UPF0316 protein Amet_0954.